The following is a 422-amino-acid chain: MTVFFKTLRNHWKKTTAGLCLLTWGGHWLYGKHCDNLLRRAACQEAQVFGNQLIPPNAQVKKATVFLNPAACKGKARTLFEKNAAPILHLCGMDVTIVKTDYEGQAKKLLELMENTDVIIVAGGDGTLQEVVTGVLRRTDEATFSKIPIGFIPLGETSSLSHTLFAESGNKVQHITDATLAIVKGETVPLDVLQIKGEKEQPVFAMTGLRWGSFRDAGVKVSKYWYLGPLKIKAAHFFSTLKEWPQTHQASISYTGPTERPPSEPEETPVQRPSLYRRILRRLASYWAQPQDALSQEVSPEVWKDVQLSTIELSITTRNNQLDPTSKEDFLNICIEPDTISKGDFITIGSRKVRNPKLHAEGTECLQASQCTLLIPEGAGGSFSIDSEEYEAMPVEVKLLPRKLQFFCDPRKREQMLTSPAQ.

Position 6 is an N6-acetyllysine (K6). The interval 15–31 (TTAGLCLLTWGGHWLYG) is hydrophobic. The DAGKc domain maps to 58–199 (AQVKKATVFL…LDVLQIKGEK (142 aa)). The interval 249–271 (QASISYTGPTERPPSEPEETPVQ) is disordered.

This sequence belongs to the AGK family. Component of the TIM22 complex, which core is composed of TIMM22, associated with TIMM10 (TIMM10A and/or TIMM10B), TIMM9, AGK and TIMM29. Interacts with SMIM26. The cofactor is Mg(2+).

Its subcellular location is the mitochondrion inner membrane. The protein resides in the mitochondrion intermembrane space. It carries out the reaction a monoacylglycerol + ATP = a monoacyl-sn-glycero-3-phosphate + ADP + H(+). It catalyses the reaction a 1,2-diacyl-sn-glycerol + ATP = a 1,2-diacyl-sn-glycero-3-phosphate + ADP + H(+). The enzyme catalyses an N-acylsphing-4-enine + ATP = an N-acylsphing-4-enine 1-phosphate + ADP + H(+). The catalysed reaction is 1-(9Z-octadecenoyl)-sn-glycerol + ATP = 1-(9Z-octadecenoyl)-sn-glycero-3-phosphate + ADP + H(+). It carries out the reaction 1,2-di-(9Z-octadecenoyl)-sn-glycerol + ATP = 1,2-di-(9Z-octadecenoyl)-sn-glycero-3-phosphate + ADP + H(+). It catalyses the reaction a 1-acyl-sn-glycerol + ATP = a 1-acyl-sn-glycero-3-phosphate + ADP + H(+). The enzyme catalyses 1-hexadecanoyl-sn-glycerol + ATP = 1-hexadecanoyl-sn-glycero-3-phosphate + ADP + H(+). The catalysed reaction is a 2-acylglycerol + ATP = a 2-acyl-sn-glycerol 3-phosphate + ADP + H(+). It carries out the reaction 2-(5Z,8Z,11Z,14Z-eicosatetraenoyl)-glycerol + ATP = 2-(5Z,8Z,11Z,14Z-eicosatetraenoyl)-sn-glycero-3-phosphate + ADP + H(+). It catalyses the reaction 1-(5Z,8Z,11Z,14Z-eicosatetraenoyl)-sn-glycerol + ATP = 1-(5Z,8Z,11Z,14Z-eicosatetraenoyl)-sn-glycero-3-phosphate + ADP + H(+). The enzyme catalyses N-(hexanoyl)sphing-4-enine + ATP = N-hexanoylsphing-4-enine 1-phosphate + ADP + H(+). The protein operates within lipid metabolism; glycerolipid metabolism. Its function is as follows. Lipid kinase that can phosphorylate both monoacylglycerol and diacylglycerol to form lysophosphatidic acid (LPA) and phosphatidic acid (PA), respectively. Phosphorylates ceramide but not sphingosine. Phosphorylates 1,2-dioleoylglycerol more rapidly than 2,3-dioleoylglycerol. Independently of its lipid kinase activity, acts as a component of the TIM22 complex. The TIM22 complex mediates the import and insertion of multi-pass transmembrane proteins into the mitochondrial inner membrane by forming a twin-pore translocase that uses the membrane potential as the external driving force. In the TIM22 complex, required for the import of a subset of metabolite carriers into mitochondria, such as ANT1/SLC25A4 and SLC25A24, while it is not required for the import of TIMM23. Overexpression increases the formation and secretion of LPA, resulting in transactivation of EGFR and activation of the downstream MAPK signaling pathway, leading to increased cell growth. The protein is Acylglycerol kinase, mitochondrial of Pongo abelii (Sumatran orangutan).